We begin with the raw amino-acid sequence, 497 residues long: Cobyric acid synthase (497 aa).

Positions 250–445 (EVTIAVIRLP…LHGIFNNGPW (196 aa)) constitute a GATase cobBQ-type domain. The active-site Nucleophile is cysteine 331. Residue histidine 437 is part of the active site.

This sequence belongs to the CobB/CobQ family. CobQ subfamily.

It functions in the pathway cofactor biosynthesis; adenosylcobalamin biosynthesis. In terms of biological role, catalyzes amidations at positions B, D, E, and G on adenosylcobyrinic A,C-diamide. NH(2) groups are provided by glutamine, and one molecule of ATP is hydrogenolyzed for each amidation. The polypeptide is Cobyric acid synthase (Acaryochloris marina (strain MBIC 11017)).